The following is a 343-amino-acid chain: Putative kinase HI_0665 (343 aa).

The active-site Proton acceptor is D209.

This sequence belongs to the HipA Ser/Thr kinase family.

This is Putative kinase HI_0665 from Haemophilus influenzae (strain ATCC 51907 / DSM 11121 / KW20 / Rd).